We begin with the raw amino-acid sequence, 4834 residues long: E3 ubiquitin-protein ligase HERC2 (4834 aa).

The disordered stretch occupies residues 50 to 88; sequence TESTQNGELPPRKDDSVEPSGTKKEDLNDKEKKDEEETP. Over residues 59–84 the composition is skewed to basic and acidic residues; that stretch reads PPRKDDSVEPSGTKKEDLNDKEKKDE. Residue threonine 272 is modified to Phosphothreonine. The RCC1 1-1 repeat unit spans residues 415–461; that stretch reads PTSHKGSLQEVIGWGLIGWKYYANVIGPIQCEGLANLGVTQIACAEK. The RCC1 1-2 repeat unit spans residues 462–512; the sequence is RFLILSRNGRVYTQAYNSDTLAPQLVQGLASRNIVKIAAHSDGHHYLALAA. An RCC1 1-3 repeat occupies 513 to 568; it reads TGEVYSWGCGDGGRLGHGDTVPLEEPKVISAFSGKQAGKHVVHIACGSTYSAAITA. Residues 569–620 form an RCC1 1-4 repeat; sequence EGELYTWGRGNYGRLGHGSSEDEAIPMLVAGLKGLKVIDVACGSGDAQTLAV. One copy of the RCC1 1-5 repeat lies at 623–674; that stretch reads NGQVWSWGDGDYGKLGRGGSDGCKTPKLIEKLQDLDVVKVRCGSQFSIALTK. Residue threonine 647 is modified to Phosphothreonine. Residues 675–726 form an RCC1 1-6 repeat; the sequence is DGQVYSWGKGDNQRLGHGTEEHVRYPKLLEGLQGKKVIDVAAGSTHCLALTE. The stretch at 728–778 is one RCC1 1-7 repeat; the sequence is SEVHSWGSNDQCQHFDTLRVTKPEPAALPGLDTKHIVGIACGPAQSFAWSS. The stretch at 948 to 980 forms a coiled coil; it reads LHAAITAEIQDIEAKKEAQKEKEIDEQEANAST. The region spanning 1207–1283 is the Cytochrome b5 heme-binding domain; it reads VTLIRKADLE…MHAFCVGQYL (77 aa). The segment at 1555–1575 is disordered; that stretch reads RKKRVPKKPESTDDEEKIGNE. Over residues 1566–1575 the composition is skewed to acidic residues; sequence TDDEEKIGNE. Serine 1577 bears the Phosphoserine mark. Positions 1859 to 1932 constitute an MIB/HERC2 domain; sequence SGPELAAMMK…KYDLKLAELP (74 aa). A disordered region spans residues 1933-1958; the sequence is AAAQPSAEDSDTEDDSEAEQTERNIH. A compositionally biased stretch (acidic residues) spans 1940-1951; sequence EDSDTEDDSEAE. The residue at position 1942 (serine 1942) is a Phosphoserine. Threonine 1944 is modified (phosphothreonine). Serine 2454 is subject to Phosphoserine. The 77-residue stretch at 2554–2630 folds into the CPH domain; the sequence is RADFLSNDDY…RYIHVELIGY (77 aa). The segment at 2703-2755 adopts a ZZ-type zinc-finger fold; it reads HPGVTCDGCQMFPINGSRFKCRNCDDFDFCETCFKTKKHNTRHTFGRINEPGQ. Zn(2+) contacts are provided by cysteine 2708, cysteine 2711, cysteine 2723, cysteine 2726, cysteine 2732, cysteine 2735, histidine 2741, and histidine 2745. A DOC domain is found at 2759-2936; the sequence is FCGRSGKQLK…ASDNEEEEDE (178 aa). Serine 2928 is modified (phosphoserine). The stretch at 2958-3009 is one RCC1 2-1 repeat; the sequence is RTKVFVWGLNDKDQLGGLKGSKIKVPSFSETLSALNVVQVAGGSKSLFAVTV. Residues 3010 to 3064 form an RCC1 2-2 repeat; it reads EGKVYACGEATNGRLGLGISSGTVPIPRQITALSSYVVKKVAVHSGGRHATALTV. One copy of the RCC1 2-3 repeat lies at 3065–3116; the sequence is DGKVFSWGEGDDGKLGHFSRMNCDKPRLIEALKTKRIRDIACGSSHSAALTS. An RCC1 2-4 repeat occupies 3118-3168; sequence GELYTWGLGEYGRLGHGDNTTQLKPKMVKVLLGHRVIQVACGSRDAQTLAL. One copy of the RCC1 2-5 repeat lies at 3171–3222; it reads EGLVFSWGDGDFGKLGRGGSEGCNIPQNIERLNGQGVCQIECGAQFSLALTK. Residues 3224-3274 form an RCC1 2-6 repeat; it reads GVVWTWGKGDYFRLGHGSDVHVRKPQVVEGLRGKKIVHVAVGALHCLAVTD. One copy of the RCC1 2-7 repeat lies at 3275-3326; the sequence is SGQVYAWGDNDHGQQGNGTTTVNRKPTLVQGLEGQKITRVACGSSHSVAWTT. 2 stretches are compositionally biased toward polar residues: residues 3602 to 3611 and 3618 to 3629; these read SQSGRLSSQP and HPYTDDTSTSGT. Positions 3602–3629 are disordered; sequence SQSGRLSSQPVVVESSHPYTDDTSTSGT. An RCC1 3-1 repeat occupies 3951–4002; the sequence is SGTIYGWGHNHRGQLGGIEGAKVKVPTPCEALATLRPVQLIGGEQTLFAVTA. The RCC1 3-2 repeat unit spans residues 4004–4056; sequence GKLYATGYGAGGRLGIGGTESVSTPTLLESIQHVFIKKVAVNSGGKHCLALSS. Residues 4058–4108 form an RCC1 3-3 repeat; sequence GEVYSWGEAEDGKLGHGNRSPCDRPRVIESLRGIEVVDVAAGGAHSACVTA. The RCC1 3-4 repeat unit spans residues 4110–4162; the sequence is GDLYTWGKGRYGRLGHSDSEDQLKPKLVEALQGHRVVDIACGSGDAQTLCLTD. One copy of the RCC1 3-5 repeat lies at 4164 to 4214; that stretch reads DTVWSWGDGDYGKLGRGGSDGCKVPMKIDSLTGLGVVKVECGSQFSVALTK. One copy of the RCC1 3-6 repeat lies at 4216–4266; the sequence is GAVYTWGKGDYHRLGHGSDDHVRRPRQVQGLQGKKVIAIATGSLHCVCCTE. One copy of the RCC1 3-7 repeat lies at 4268–4318; sequence GEVYTWGDNDEGQLGDGTTNAIQRPRLVAALQGKKVNRVACGSAHTLAWST. Positions 4457-4794 constitute an HECT domain; the sequence is DSLLLPHRVW…IHFCKSIDTD (338 aa). Catalysis depends on cysteine 4762, which acts as the Glycyl thioester intermediate. The disordered stretch occupies residues 4804-4834; that stretch reads EPAADDSSDDSDNEDVDSFASDSTQDYLTGH. Over residues 4806-4820 the composition is skewed to acidic residues; it reads AADDSSDDSDNEDVD. A phosphoserine mark is found at serine 4810, serine 4811, and serine 4814. Over residues 4823 to 4834 the composition is skewed to polar residues; sequence ASDSTQDYLTGH. At threonine 4827 the chain carries Phosphothreonine.

As to quaternary structure, interacts (when phosphorylated at Thr-4827 and sumoylated) with RNF8 (via FHA domain); this interaction increases after ionizing radiation (IR) treatment. Interacts with XPA. Interacts with NEURL4. Via its interaction with NEURL4, may indirectly interact with CCP110 and CEP97. In terms of processing, phosphorylation at Thr-4827 is required for interaction with RNF8. Sumoylated with SUMO1 by PIAS4 in response to double-strand breaks (DSBs), promoting the interaction with RNF8.

The protein localises to the cytoplasm. The protein resides in the cytoskeleton. Its subcellular location is the microtubule organizing center. It is found in the centrosome. It localises to the centriole. The protein localises to the nucleus. The catalysed reaction is S-ubiquitinyl-[E2 ubiquitin-conjugating enzyme]-L-cysteine + [acceptor protein]-L-lysine = [E2 ubiquitin-conjugating enzyme]-L-cysteine + N(6)-ubiquitinyl-[acceptor protein]-L-lysine.. It functions in the pathway protein modification; protein ubiquitination. Its function is as follows. E3 ubiquitin-protein ligase that regulates ubiquitin-dependent retention of repair proteins on damaged chromosomes. Recruited to sites of DNA damage in response to ionizing radiation (IR) and facilitates the assembly of UBE2N and RNF8 promoting DNA damage-induced formation of 'Lys-63'-linked ubiquitin chains. Acts as a mediator of binding specificity between UBE2N and RNF8. Involved in the maintenance of RNF168 levels. E3 ubiquitin-protein ligase that promotes the ubiquitination and proteasomal degradation of XPA which influences the circadian oscillation of DNA excision repair activity. By controlling the steady-state expression of the IGF1R receptor, indirectly regulates the insulin-like growth factor receptor signaling pathway. Also modulates iron metabolism by regulating the basal turnover of FBXL5. This Homo sapiens (Human) protein is E3 ubiquitin-protein ligase HERC2.